A 314-amino-acid polypeptide reads, in one-letter code: Mitochondrial thiamine pyrophosphate carrier 1 (314 aa).

Transmembrane regions (helical) follow at residues Val-14 to Ala-30, Leu-84 to Phe-100, Leu-116 to Leu-136, Gly-170 to Phe-186, Ser-217 to Leu-233, and Gly-285 to Trp-302. 3 Solcar repeats span residues Val-14 to Tyr-103, Glu-110 to Tyr-195, and Glu-210 to Tyr-310.

The protein belongs to the mitochondrial carrier (TC 2.A.29) family.

The protein localises to the mitochondrion inner membrane. Functionally, mitochondrial transporter that mediates uptake of thiamine pyrophosphate (ThPP) into mitochondria. This is Mitochondrial thiamine pyrophosphate carrier 1 (TPC1) from Saccharomyces cerevisiae (strain ATCC 204508 / S288c) (Baker's yeast).